The sequence spans 301 residues: Nodulation protein D 3 (301 aa).

The 58-residue stretch at 6-63 (LDLNLLVVLDALLTARNLTAAASSINLSQPAMSAAVARLRNYFNDELFTMSGRERVLT) folds into the HTH lysR-type domain. A DNA-binding region (H-T-H motif) is located at residues 23 to 43 (LTAAASSINLSQPAMSAAVAR).

The protein belongs to the LysR transcriptional regulatory family.

NodD regulates the expression of the nodABCFE genes which encode other nodulation proteins. NodD is also a negative regulator of its own expression. Binds flavonoids as inducers. The chain is Nodulation protein D 3 (nodD3) from Mesorhizobium japonicum (strain LMG 29417 / CECT 9101 / MAFF 303099) (Mesorhizobium loti (strain MAFF 303099)).